Consider the following 290-residue polypeptide: Bifunctional protein FolD (290 aa).

NADP(+) is bound by residues 174-176 (GHS), Ile199, and Ile240.

Belongs to the tetrahydrofolate dehydrogenase/cyclohydrolase family. In terms of assembly, homodimer.

It carries out the reaction (6R)-5,10-methylene-5,6,7,8-tetrahydrofolate + NADP(+) = (6R)-5,10-methenyltetrahydrofolate + NADPH. The enzyme catalyses (6R)-5,10-methenyltetrahydrofolate + H2O = (6R)-10-formyltetrahydrofolate + H(+). It participates in one-carbon metabolism; tetrahydrofolate interconversion. Catalyzes the oxidation of 5,10-methylenetetrahydrofolate to 5,10-methenyltetrahydrofolate and then the hydrolysis of 5,10-methenyltetrahydrofolate to 10-formyltetrahydrofolate. In Methanosarcina acetivorans (strain ATCC 35395 / DSM 2834 / JCM 12185 / C2A), this protein is Bifunctional protein FolD.